Here is a 98-residue protein sequence, read N- to C-terminus: Prolactin-releasing peptide (98 aa).

The first 22 residues, 1–22 (MKAVGAWLLCLLLLGLALQGAA), serve as a signal peptide directing secretion. 2 disordered regions span residues 52-71 (RFGRRRAAPGDGPRPGPRRV) and 79-98 (GGAEPSRALPGRLTAQLVQE). Phe53 carries the phenylalanine amide modification. Positions 58–98 (AAPGDGPRPGPRRVPACFRLEGGAEPSRALPGRLTAQLVQE) are excised as a propeptide.

Post-translationally, amidation of C-terminus is required for receptor interaction. In terms of tissue distribution, medulla oblongata and hypothalamus.

It localises to the secreted. Stimulates prolactin (PRL) release and regulates the expression of prolactin through its receptor GPR10. May stimulate lactotrophs directly to secrete PRL. This is Prolactin-releasing peptide (PRLH) from Bos taurus (Bovine).